A 293-amino-acid polypeptide reads, in one-letter code: Acetylglutamate kinase (293 aa).

Residues 70–71 (GG), R92, and N186 contribute to the substrate site.

The protein belongs to the acetylglutamate kinase family. ArgB subfamily.

The protein localises to the cytoplasm. It carries out the reaction N-acetyl-L-glutamate + ATP = N-acetyl-L-glutamyl 5-phosphate + ADP. It participates in amino-acid biosynthesis; L-arginine biosynthesis; N(2)-acetyl-L-ornithine from L-glutamate: step 2/4. Its function is as follows. Catalyzes the ATP-dependent phosphorylation of N-acetyl-L-glutamate. This chain is Acetylglutamate kinase, found in Synechococcus sp. (strain CC9605).